Reading from the N-terminus, the 545-residue chain is E3 ubiquitin-protein ligase ipaH9.8 (545 aa).

Positions 1–242 (MLPINNNFSL…YHGPRIYFSM (242 aa)) are interaction with target proteins. LRR repeat units lie at residues 57 to 77 (NSDE…NLPA), 78 to 99 (QITL…PVTL), 100 to 117 (KKLY…VLPP), 118 to 139 (ALES…PDSL), 140 to 157 (LTMN…SLPQ), 158 to 179 (ALKN…SEGN), 182 to 203 (VVRE…ILNL), and 205 to 228 (NECS…QRLT). Residues 243 to 250 (SDGQQNTL) are linker. An E3 ubiquitin-protein ligase catalytic domain region spans residues 251–545 (HRPLADAVTA…PENGSQLHHS (295 aa)). The NEL domain occupies 253 to 545 (PLADAVTAWF…PENGSQLHHS (293 aa)). C337 serves as the catalytic Glycyl thioester intermediate.

This sequence belongs to the LRR-containing bacterial E3 ligase family. As to quaternary structure, also interacts with human and mouse U2AF1 (U2AF35). In terms of processing, autoubiquitinated (in vitro). Ubiquitinated in the presence of host E1 ubiquitin-activating enzyme, E2 ubiquitin-conjugating enzyme and ubiquitin.

The protein resides in the secreted. Its subcellular location is the host cytoplasm. The protein localises to the host nucleus. It carries out the reaction S-ubiquitinyl-[E2 ubiquitin-conjugating enzyme]-L-cysteine + [acceptor protein]-L-lysine = [E2 ubiquitin-conjugating enzyme]-L-cysteine + N(6)-ubiquitinyl-[acceptor protein]-L-lysine.. The protein operates within protein modification; protein ubiquitination. Its activity is regulated as follows. Exists in an autoinhibited state in the absence of substrate protein, due to interactions of the leucine-rich repeats with NEL domain. Is activated upon binding to a substrate protein. In terms of biological role, effector E3 ubiquitin ligase that interferes with host's ubiquitination pathway and modulates the acute inflammatory responses, thus facilitating bacterial colonization within the host cell. Interacts with IKBKG (NEMO) and TNIP1 (ABIN-1), a ubiquitin-binding adapter protein, which results in TNIP1-dependent 'Lys-27'-linked polyubiquitination of IKBKG. Consequently, polyubiquitinated IKBKG undergoes proteasome-dependent degradation, which perturbs NF-kappa-B activation during bacterial infection. Mediates polyubiquitination of host U2AF1, leading to its proteasomal degradation. Catalyzes 'Lys-48'-linked polyubiquitination and subsequent degradation of a subset of host guanylate-binding proteins (GBP1, GBP2, GBP4 and GBP6), thereby suppressing host cell defense. In contrast, host GBP3 and GBP7 are not ubiquitinated by IpaH9.8. Uses UBE2D2 (UBCH5B) as an E2 ubiquitin-conjugating enzyme. In Shigella flexneri, this protein is E3 ubiquitin-protein ligase ipaH9.8.